We begin with the raw amino-acid sequence, 330 residues long: ATP-dependent Clp protease proteolytic subunit-related protein 3, chloroplastic (330 aa).

The transit peptide at 1-43 (MASCLQASMNSLLPRSSSFSPHPPLSSNSSGRRNLKTFRYAFR) directs the protein to the chloroplast. The tract at residues 7 to 32 (ASMNSLLPRSSSFSPHPPLSSNSSGR) is disordered. A compositionally biased stretch (low complexity) spans 8 to 30 (SMNSLLPRSSSFSPHPPLSSNSS).

This sequence belongs to the peptidase S14 family. As to quaternary structure, component of the chloroplastic Clp protease core complex which consist of at least 16 proteins: CLPP4 (3 copies), CLPP5 (3 copies), CLPR4 (2 copies), ClpP1 (1 copy), CLPP6 (1 copy), CLPR2 (1 copy), CLPT1 (1 copy), CLPT2 (1 copy) and 3 copies of CLPP3 and/or CLPR1 and/or CLPR3. The core complex is organized in two heptameric rings, one containing CLPP3,4,5,6 in a 1:2:3:1 ratio and the other CLPP1 and CLPR1,2,3,4 in a 3:1:1:1:1 ratio.

The protein localises to the plastid. Its subcellular location is the chloroplast. This chain is ATP-dependent Clp protease proteolytic subunit-related protein 3, chloroplastic, found in Arabidopsis thaliana (Mouse-ear cress).